The chain runs to 228 residues: Adapter protein MecA (228 aa).

The disordered stretch occupies residues 79–98 (GQKNDDSAADQTDDEGTDTQ). Residues 85–95 (SAADQTDDEGT) show a composition bias toward acidic residues.

The protein belongs to the MecA family. Homodimer.

Enables the recognition and targeting of unfolded and aggregated proteins to the ClpC protease or to other proteins involved in proteolysis. The sequence is that of Adapter protein MecA from Lacticaseibacillus casei (strain BL23) (Lactobacillus casei).